The chain runs to 350 residues: Serine/arginine-rich splicing factor RS40 (350 aa).

RRM domains are found at residues 2 to 74 and 97 to 168; these read KPVF…WTKS and KTLF…YAVK. Basic and acidic residues-rich tracts occupy residues 73–82 and 167–187; these read KSERGGDKRS and VKDD…DRSP. 2 disordered regions span residues 73-94 and 167-350; these read KSER…SSMR and VKDD…PADE. 3 positions are modified to phosphoserine: S193, S195, and S211. Basic and acidic residues-rich tracts occupy residues 216-227 and 240-255; these read YRKERTSPDYGR and GSPE…DSPR. Residues S241, S262, S278, S298, S308, S335, and S340 each carry the phosphoserine modification. Basic and acidic residues predominate over residues 272 to 289; the sequence is NKRERMSPNHSPFKKESP. Residues 299-308 show a composition bias toward basic and acidic residues; that stretch reads PIERRERSRS.

This sequence belongs to the splicing factor SR family. RS subfamily. Component of the spliceosome. Interacts with SNRNP35. Interacts with CYP59. Interacts with RCF3 and CPL1. Interacts with DRB1/HYL1 and SE. As to expression, highly expressed in roots and flowers. A presumably longer alternatively spliced form is found in leaves, stems and flowers.

The protein resides in the nucleus. Its subcellular location is the nucleus speckle. Its function is as follows. Required for constitutive and alternative pre-mRNA splicing. Involved in primary miRNA processing and pri-miRNA biogenesis. Binds both intronless and intron-containing pri-miRNAs. The protein is Serine/arginine-rich splicing factor RS40 (RS40) of Arabidopsis thaliana (Mouse-ear cress).